The primary structure comprises 596 residues: Probable translation initiation factor IF-2 (596 aa).

The 218-residue stretch at 3–220 folds into the tr-type G domain; it reads IRSPIVSVLG…MLLGLAQEYL (218 aa). A G1 region spans residues 12-19; the sequence is GHVDHGKT. 12–19 serves as a coordination point for GTP; that stretch reads GHVDHGKT. Residues 37–41 form a G2 region; the sequence is GITQH. Positions 76-79 are G3; the sequence is DTPG. Residues 76-80 and 130-133 each bind GTP; these read DTPGH and NKID. A G4 region spans residues 130–133; sequence NKID. Residues 198–200 form a G5 region; it reads SAK.

The protein belongs to the TRAFAC class translation factor GTPase superfamily. Classic translation factor GTPase family. IF-2 subfamily.

Its function is as follows. Function in general translation initiation by promoting the binding of the formylmethionine-tRNA to ribosomes. Seems to function along with eIF-2. In Methanobrevibacter smithii (strain ATCC 35061 / DSM 861 / OCM 144 / PS), this protein is Probable translation initiation factor IF-2.